We begin with the raw amino-acid sequence, 168 residues long: tRNA-splicing endonuclease (168 aa).

Residues Y107, H114, and K145 contribute to the active site.

This sequence belongs to the tRNA-intron endonuclease family. Archaeal short subfamily. In terms of assembly, homotetramer; although the tetramer contains four active sites, only two participate in the cleavage. Therefore, it should be considered as a dimer of dimers.

The catalysed reaction is pretRNA = a 3'-half-tRNA molecule with a 5'-OH end + a 5'-half-tRNA molecule with a 2',3'-cyclic phosphate end + an intron with a 2',3'-cyclic phosphate and a 5'-hydroxyl terminus.. Functionally, endonuclease that removes tRNA introns. Cleaves pre-tRNA at the 5'- and 3'-splice sites to release the intron. The products are an intron and two tRNA half-molecules bearing 2',3' cyclic phosphate and 5'-OH termini. Recognizes a pseudosymmetric substrate in which 2 bulged loops of 3 bases are separated by a stem of 4 bp. This chain is tRNA-splicing endonuclease, found in Thermococcus kodakarensis (strain ATCC BAA-918 / JCM 12380 / KOD1) (Pyrococcus kodakaraensis (strain KOD1)).